Reading from the N-terminus, the 918-residue chain is Bromodomain testis-specific protein (918 aa).

The disordered stretch occupies residues Met1–Lys26. The Bromo 1 domain maps to Arg29–Met135. The short motif at Asn204–Pro215 is the Nuclear localization signal element. Disordered stretches follow at residues Arg241 to Thr267, Glu379 to Arg430, Lys575 to Ser712, Ile738 to Gln764, and Asp862 to Gly899. Residues Thr267–Ile376 enclose the Bromo 2 domain. Over residues Ser399–Ser416 the composition is skewed to low complexity. Residues Glu426–Thr452 are a coiled coil. One can recognise an NET domain in the interval Asp496–Pro578. Residues Lys575–Ile584 show a composition bias toward basic residues. Residues Lys605–His617 show a composition bias toward basic and acidic residues. 2 stretches are compositionally biased toward low complexity: residues Ser622–Ser648 and Pro739–Gln764. A coiled-coil region spans residues Glu815–Asp902. A compositionally biased stretch (basic and acidic residues) spans Val877–Ala896.

Belongs to the BET family.

It localises to the nucleus. Functionally, testis-specific chromatin protein that specifically binds histone H4 acetylated at 'Lys-5' and 'Lys-8' (H4K5ac and H4K8ac, respectively) and plays a key role in spermatogenesis. Required in late pachytene spermatocytes: plays a role in meiotic and post-meiotic cells by binding to acetylated histones at the promoter of specific meiotic and post-meiotic genes, facilitating their activation at the appropriate time. In the post-meiotic phase of spermatogenesis, binds to hyperacetylated histones and participates in their general removal from DNA. Also recognizes and binds a subset of butyrylated histones: able to bind histone H4 butyrylated at 'Lys-8' (H4K8ac), while it is not able to bind H4 butyrylated at 'Lys-5' (H4K5ac). The sequence is that of Bromodomain testis-specific protein (brdt) from Danio rerio (Zebrafish).